A 226-amino-acid chain; its full sequence is UPF0758 protein SE_1336 (226 aa).

One can recognise an MPN domain in the interval 102–224 (QITHPSDVAS…FTSLVEAGYF (123 aa)). Zn(2+)-binding residues include H173, H175, and D186. Positions 173–186 (HNHPSGDVTPSKED) match the JAMM motif motif.

Belongs to the UPF0758 family.

The protein is UPF0758 protein SE_1336 of Staphylococcus epidermidis (strain ATCC 12228 / FDA PCI 1200).